The sequence spans 345 residues: Ferrochelatase (345 aa).

Fe cation is bound by residues H215 and E296.

Belongs to the ferrochelatase family.

The protein resides in the cytoplasm. It carries out the reaction heme b + 2 H(+) = protoporphyrin IX + Fe(2+). It functions in the pathway porphyrin-containing compound metabolism; protoheme biosynthesis; protoheme from protoporphyrin-IX: step 1/1. In terms of biological role, catalyzes the ferrous insertion into protoporphyrin IX. The protein is Ferrochelatase of Rhodopseudomonas palustris (strain BisA53).